A 509-amino-acid chain; its full sequence is Lysine--tRNA ligase (509 aa).

Mg(2+) contacts are provided by glutamate 419 and glutamate 426.

The protein belongs to the class-II aminoacyl-tRNA synthetase family. As to quaternary structure, homodimer. It depends on Mg(2+) as a cofactor.

The protein localises to the cytoplasm. It catalyses the reaction tRNA(Lys) + L-lysine + ATP = L-lysyl-tRNA(Lys) + AMP + diphosphate. In Methylobacillus flagellatus (strain ATCC 51484 / DSM 6875 / VKM B-1610 / KT), this protein is Lysine--tRNA ligase.